The following is a 147-amino-acid chain: Globin, major polymeric component P1 (147 aa).

In terms of domain architecture, Globin spans 2-146 (HLTADQVAAL…ISDACIAGLQ (145 aa)). His96 contacts heme b.

This sequence belongs to the globin family. As to quaternary structure, polymer.

The polypeptide is Globin, major polymeric component P1 (Glycera dibranchiata (Bloodworm)).